The chain runs to 314 residues: Ribosomal RNA small subunit methyltransferase H (314 aa).

Residues 36-38 (GGH), aspartate 56, phenylalanine 83, aspartate 104, and glutamine 111 contribute to the S-adenosyl-L-methionine site.

Belongs to the methyltransferase superfamily. RsmH family.

Its subcellular location is the cytoplasm. The catalysed reaction is cytidine(1402) in 16S rRNA + S-adenosyl-L-methionine = N(4)-methylcytidine(1402) in 16S rRNA + S-adenosyl-L-homocysteine + H(+). Functionally, specifically methylates the N4 position of cytidine in position 1402 (C1402) of 16S rRNA. The sequence is that of Ribosomal RNA small subunit methyltransferase H from Syntrophotalea carbinolica (strain DSM 2380 / NBRC 103641 / GraBd1) (Pelobacter carbinolicus).